Reading from the N-terminus, the 187-residue chain is ATP synthase subunit delta (187 aa).

This sequence belongs to the ATPase delta chain family. F-type ATPases have 2 components, F(1) - the catalytic core - and F(0) - the membrane proton channel. F(1) has five subunits: alpha(3), beta(3), gamma(1), delta(1), epsilon(1). F(0) has three main subunits: a(1), b(2) and c(10-14). The alpha and beta chains form an alternating ring which encloses part of the gamma chain. F(1) is attached to F(0) by a central stalk formed by the gamma and epsilon chains, while a peripheral stalk is formed by the delta and b chains.

The protein resides in the cell membrane. F(1)F(0) ATP synthase produces ATP from ADP in the presence of a proton or sodium gradient. F-type ATPases consist of two structural domains, F(1) containing the extramembraneous catalytic core and F(0) containing the membrane proton channel, linked together by a central stalk and a peripheral stalk. During catalysis, ATP synthesis in the catalytic domain of F(1) is coupled via a rotary mechanism of the central stalk subunits to proton translocation. Functionally, this protein is part of the stalk that links CF(0) to CF(1). It either transmits conformational changes from CF(0) to CF(1) or is implicated in proton conduction. The protein is ATP synthase subunit delta of Mesomycoplasma hyopneumoniae (strain J / ATCC 25934 / NCTC 10110) (Mycoplasma hyopneumoniae).